Here is a 189-residue protein sequence, read N- to C-terminus: ATP-dependent protease subunit HslV (189 aa).

Thr12 is a catalytic residue. 3 residues coordinate Na(+): Ser172, Cys175, and Thr178.

The protein belongs to the peptidase T1B family. HslV subfamily. A double ring-shaped homohexamer of HslV is capped on each side by a ring-shaped HslU homohexamer. The assembly of the HslU/HslV complex is dependent on binding of ATP.

Its subcellular location is the cytoplasm. It catalyses the reaction ATP-dependent cleavage of peptide bonds with broad specificity.. Allosterically activated by HslU binding. Its function is as follows. Protease subunit of a proteasome-like degradation complex believed to be a general protein degrading machinery. This is ATP-dependent protease subunit HslV from Ehrlichia chaffeensis (strain ATCC CRL-10679 / Arkansas).